The chain runs to 291 residues: 33 kDa chaperonin (291 aa).

Disulfide bonds link C235–C237 and C268–C271.

The protein belongs to the HSP33 family. Under oxidizing conditions two disulfide bonds are formed involving the reactive cysteines. Under reducing conditions zinc is bound to the reactive cysteines and the protein is inactive.

The protein localises to the cytoplasm. In terms of biological role, redox regulated molecular chaperone. Protects both thermally unfolding and oxidatively damaged proteins from irreversible aggregation. Plays an important role in the bacterial defense system toward oxidative stress. This Streptococcus agalactiae serotype Ia (strain ATCC 27591 / A909 / CDC SS700) protein is 33 kDa chaperonin.